A 359-amino-acid chain; its full sequence is Small ribosomal subunit biogenesis GTPase RsgA (359 aa).

A CP-type G domain is found at 101–259 (KRKGSQAIAS…LMDNPGIREV (159 aa)). Residues 149–152 (NKKD) and 201–209 (GSSGAGKST) contribute to the GTP site. The Zn(2+) site is built by cysteine 284, cysteine 289, histidine 291, and cysteine 297. Residues 331 to 359 (DPEEARKKKQKDKQMSKALQKRLKDKGRK) form a disordered region. The span at 349 to 359 (LQKRLKDKGRK) shows a compositional bias: basic residues.

The protein belongs to the TRAFAC class YlqF/YawG GTPase family. RsgA subfamily. In terms of assembly, monomer. Associates with 30S ribosomal subunit, binds 16S rRNA. It depends on Zn(2+) as a cofactor.

The protein localises to the cytoplasm. Its function is as follows. One of several proteins that assist in the late maturation steps of the functional core of the 30S ribosomal subunit. Helps release RbfA from mature subunits. May play a role in the assembly of ribosomal proteins into the subunit. Circularly permuted GTPase that catalyzes slow GTP hydrolysis, GTPase activity is stimulated by the 30S ribosomal subunit. This is Small ribosomal subunit biogenesis GTPase RsgA from Leptospira interrogans serogroup Icterohaemorrhagiae serovar copenhageni (strain Fiocruz L1-130).